We begin with the raw amino-acid sequence, 196 residues long: Orotate phosphoribosyltransferase (196 aa).

117–125 is a binding site for 5-phospho-alpha-D-ribose 1-diphosphate; it reads EDVVTTGLS. T121 and R149 together coordinate orotate.

This sequence belongs to the purine/pyrimidine phosphoribosyltransferase family. PyrE subfamily. In terms of assembly, homodimer. The cofactor is Mg(2+).

It catalyses the reaction orotidine 5'-phosphate + diphosphate = orotate + 5-phospho-alpha-D-ribose 1-diphosphate. It participates in pyrimidine metabolism; UMP biosynthesis via de novo pathway; UMP from orotate: step 1/2. Functionally, catalyzes the transfer of a ribosyl phosphate group from 5-phosphoribose 1-diphosphate to orotate, leading to the formation of orotidine monophosphate (OMP). The chain is Orotate phosphoribosyltransferase from Sphingopyxis alaskensis (strain DSM 13593 / LMG 18877 / RB2256) (Sphingomonas alaskensis).